Here is a 443-residue protein sequence, read N- to C-terminus: Chromosomal replication initiator protein DnaA (443 aa).

The tract at residues 1-80 (MFLEEKLNLV…ETCGDKIPVE (80 aa)) is domain I, interacts with DnaA modulators. The segment at 80–104 (EILIETKAASPLQSILEKSFDQKDF) is domain II. The interval 105 to 321 (QFNPDYTFET…GALNDIYLYK (217 aa)) is domain III, AAA+ region. Positions 148, 150, 151, and 152 each coordinate ATP. Positions 322-443 (KSYSLLFLNL…ERISSKYKLQ (122 aa)) are domain IV, binds dsDNA.

The protein belongs to the DnaA family. In terms of assembly, oligomerizes as a right-handed, spiral filament on DNA at oriC.

It localises to the cytoplasm. Its function is as follows. Plays an essential role in the initiation and regulation of chromosomal replication. ATP-DnaA binds to the origin of replication (oriC) to initiate formation of the DNA replication initiation complex once per cell cycle. Binds the DnaA box (a 9 base pair repeat at the origin) and separates the double-stranded (ds)DNA. Forms a right-handed helical filament on oriC DNA; dsDNA binds to the exterior of the filament while single-stranded (ss)DNA is stabiized in the filament's interior. The ATP-DnaA-oriC complex binds and stabilizes one strand of the AT-rich DNA unwinding element (DUE), permitting loading of DNA polymerase. After initiation quickly degrades to an ADP-DnaA complex that is not apt for DNA replication. Binds acidic phospholipids. In Leptospira interrogans serogroup Icterohaemorrhagiae serovar copenhageni (strain Fiocruz L1-130), this protein is Chromosomal replication initiator protein DnaA.